A 262-amino-acid polypeptide reads, in one-letter code: MQQPIVGVGHSMGGCQIATLSVTSRRMFSTMILLDPAIGPLDMGLATLGLGQLTLRRRTQWPTREDAEKALRTSFSTWDPQVLDLLIRHSIHSDKQSIEMEDGPVSLVTGRYQELVNYIKPSFIRSGKVNGQELVHQTGPVDMYHMLGLVTCSALYLCGGESTLSVPRARDLWLSRTAKLSYSKEPGETRKVDERVVPDTGHFLPMEEPKECADIIADWIEKDECIAWNCCLGKRGKTWRELSNASKEMGAEAWMEYLQSKL.

A Peroxisomal targeting signal type 1 motif is present at residues 260 to 262; it reads SKL.

Belongs to the AB hydrolase superfamily. AKT2 hydrolase family.

It localises to the peroxisome. It functions in the pathway mycotoxin biosynthesis. Its function is as follows. Abhydrolase domain-containing protein; part of the gene clusters that mediate the biosynthesis of the host-selective toxins (HSTs) AF-toxins responsible for Alternaria black spot of strawberry disease by the strawberry pathotype. AF-toxin I and III are valine derivatives of 2,3-dyhydroxy-isovaleric acid and 2-hydroxy-isovaleric acid respectively, while AF II is an isoleucine derivative of 2-hydroxy-valeric acid. These derivatives are bound to a 9,10-epoxy-8-hydroxy-9-methyl-decatrienoic acid (EDA) moiety. On cellular level, AF-toxins affect plasma membrane of susceptible cells and cause a sudden increase in loss of K(+) after a few minutes of toxin treatment. The aldo-keto reductase AFTS1 catalyzes the conversion of 2-keto-isovaleric acid (2-KIV) to 2-hydroxy-isovaleric acid (2-HIV) by reduction of its ketone to an alcohol. The acyl-CoA ligase AFT1, the hydrolase AFT2 and the enoyl-CoA hydratases AFT3 and AFT6, but also the polyketide synthase AFT9, the acyl-CoA dehydrogenase AFT10, the cytochrome P450 monooxygenase AFT11 and the oxidoreductase AFT12 are all involved in the biosynthesis of the AK-, AF- and ACT-toxin common EDA structural moiety. The exact function of each enzyme, and of additional enzymes identified within the AF-toxin clusters have still to be determined. In Alternaria alternata (Alternaria rot fungus), this protein is Abhydrolase domain-containing protein AFT2-1.